We begin with the raw amino-acid sequence, 157 residues long: Transcriptional repressor NrdR (157 aa).

The segment covering 1 to 11 has biased composition (polar residues); that stretch reads MQCPSCQNTDS. The tract at residues 1–21 is disordered; that stretch reads MQCPSCQNTDSRVLESRSADT. A zinc finger spans residues 3 to 34; it reads CPSCQNTDSRVLESRSADTGKSVRRRRECLNC. One can recognise an ATP-cone domain in the interval 49–139; sequence ITVIKRSESK…VYRQFNGIND (91 aa).

It belongs to the NrdR family. Zn(2+) serves as cofactor.

Negatively regulates transcription of bacterial ribonucleotide reductase nrd genes and operons by binding to NrdR-boxes. This Prochlorococcus marinus (strain MIT 9211) protein is Transcriptional repressor NrdR.